We begin with the raw amino-acid sequence, 173 residues long: MYSFMGGGLFCAWVGTILLVVATATDHWMQYRLSGSFAHQGLWRYCLGNKCFLQTESIAYWNATRAFMILSALCATSGIIMGVLAFAQQSTFTRLSRPFSAGIMFFASTLFVLLALAIYTGVTVSFLGRRFGDWRFSWSYILGWVALLMTFFAGIFYMCAYRMHECRRLSTPR.

The Cytoplasmic segment spans residues 1–3 (MYS). The helical transmembrane segment at 4–24 (FMGGGLFCAWVGTILLVVATA) threads the bilayer. Over 25 to 66 (TDHWMQYRLSGSFAHQGLWRYCLGNKCFLQTESIAYWNATRA) the chain is Extracellular. Tryptophan 43 and tryptophan 61 each carry a C-linked (Man) tryptophan glycan. An N-linked (GlcNAc...) asparagine glycan is attached at asparagine 62. A helical membrane pass occupies residues 67–87 (FMILSALCATSGIIMGVLAFA). At 88–98 (QQSTFTRLSRP) the chain is on the cytoplasmic side. Residues 99 to 119 (FSAGIMFFASTLFVLLALAIY) form a helical membrane-spanning segment. At 120-140 (TGVTVSFLGRRFGDWRFSWSY) the chain is on the extracellular side. A helical membrane pass occupies residues 141–161 (ILGWVALLMTFFAGIFYMCAY). Residues 162-173 (RMHECRRLSTPR) are Cytoplasmic-facing. Position 170 is a phosphoserine (serine 170). A Phosphothreonine modification is found at threonine 171.

This sequence belongs to the PMP-22/EMP/MP20 family. As to quaternary structure, seems to be associated with itself or another lens membrane component via disulfide bonds. Eye lens specific.

The protein resides in the membrane. Functionally, present in the thicker 16-17 nm junctions of mammalian lens fiber cells, where it may contribute to cell junctional organization. Acts as a receptor for calmodulin. May play an important role in both lens development and cataractogenesis. This Rattus norvegicus (Rat) protein is Lens fiber membrane intrinsic protein (Lim2).